Reading from the N-terminus, the 346-residue chain is Phosphoribosylformylglycinamidine cyclo-ligase (346 aa).

This sequence belongs to the AIR synthase family.

It localises to the cytoplasm. It catalyses the reaction 2-formamido-N(1)-(5-O-phospho-beta-D-ribosyl)acetamidine + ATP = 5-amino-1-(5-phospho-beta-D-ribosyl)imidazole + ADP + phosphate + H(+). It functions in the pathway purine metabolism; IMP biosynthesis via de novo pathway; 5-amino-1-(5-phospho-D-ribosyl)imidazole from N(2)-formyl-N(1)-(5-phospho-D-ribosyl)glycinamide: step 2/2. This is Phosphoribosylformylglycinamidine cyclo-ligase from Vibrio campbellii (strain ATCC BAA-1116).